Consider the following 168-residue polypeptide: Oleosin 18.2 kDa (168 aa).

An N-acetylalanine modification is found at Ala-2. The interval 2–45 (AEVRDRNLPHQVQVHPQYRLDNTTGGGYGAKNYHSGPSTSQVLA) is polar. 3 helical membrane-spanning segments follow: residues 43 to 63 (VLAVLTLLPIGGTLLALAGLT), 76 to 96 (PLFIIFSPVLVPAAIAIAMAV), and 97 to 117 (TGFLSSGAFGLTGLSSLSYVL). A hydrophobic region spans residues 46–117 (VLTLLPIGGT…TGLSSLSYVL (72 aa)).

Belongs to the oleosin family.

It is found in the lipid droplet. The protein resides in the membrane. In terms of biological role, may have a structural role to stabilize the lipid body during desiccation of the seed by preventing coalescence of the oil. Probably interacts with both lipid and phospholipid moieties of lipid bodies. May also provide recognition signals for specific lipase anchorage in lipolysis during seedling growth. This is Oleosin 18.2 kDa (MATP6-A) from Gossypium hirsutum (Upland cotton).